The sequence spans 181 residues: SRP-independent targeting protein 2 (181 aa).

Topologically, residues 1-15 are cytoplasmic; that stretch reads MAGKAGRKQASSNAK. The helical transmembrane segment at 16 to 36 threads the bilayer; the sequence is IIQGLYKQVSLFLGMAIVRLF. Residues 37 to 45 are Lumenal-facing; that stretch reads ISRKVTIGQ. The chain crosses the membrane as a helical span at residues 46 to 66; sequence WIKLVALNVPMFVALYIIVLS. Topologically, residues 67–89 are cytoplasmic; that stretch reads GKPKYDGNRVVKQGIDLNDNTNL. A helical membrane pass occupies residues 90-110; that stretch reads ISYFFDLIYLSLFGNIGIIAF. At 111-112 the chain is on the lumenal side; it reads RT. A helical membrane pass occupies residues 113–133; it reads FKFWWCLLLCPIYAGYKLYGL. Over 134-181 the chain is Cytoplasmic; that stretch reads KNMFMPGAQQTQADNRSKNANEGQSKSKRQMKRERRGETDSKIKYKYR. Polar residues predominate over residues 144 to 157; it reads TQADNRSKNANEGQ. The tract at residues 144 to 181 is disordered; it reads TQADNRSKNANEGQSKSKRQMKRERRGETDSKIKYKYR. The segment covering 168-181 has biased composition (basic and acidic residues); that stretch reads RRGETDSKIKYKYR.

It belongs to the TMEM208 family. In terms of assembly, interacts with SND1, PHO88/SND3 and the translocon complex subunit SEC61. ENV10/SND2 and PHO88/SND3 form a complex with the translocon in the endoplasmic reticulum membrane.

The protein resides in the endoplasmic reticulum membrane. Functions in the SND pathway, a SRP (signal recognition particle) and GET (guided entry of tail-anchored proteins) independent pathway for targeting a broad range of substrate proteins to the endoplasmic reticulum. SND functions in parallel to GET in targeting proteins with downstream hydrophobic motifs. Involved in vacuolar processing and morphology. The chain is SRP-independent targeting protein 2 from Saccharomyces cerevisiae (strain ATCC 204508 / S288c) (Baker's yeast).